The chain runs to 193 residues: MADAYTPRFRKLYDETIVKAMTEKFGYKNHMEVPKITKIVLNMGVGEATQDKKKVEQAALEMTKIAGQKAVITKAKKSIAQFKLREGMPIGAKVTLRRERMYEFLDRFVTIALPRVRDFRGLNPKSFDGRGNYATGLKEQLIFPEISYDSVDKIRGMDVIVATTAKTDDEARELLRLFGFPFPADNEDQKQAA.

Belongs to the universal ribosomal protein uL5 family. Part of the 50S ribosomal subunit; part of the 5S rRNA/L5/L18/L25 subcomplex. Contacts the 5S rRNA and the P site tRNA. Forms a bridge to the 30S subunit in the 70S ribosome.

In terms of biological role, this is one of the proteins that bind and probably mediate the attachment of the 5S RNA into the large ribosomal subunit, where it forms part of the central protuberance. In the 70S ribosome it contacts protein S13 of the 30S subunit (bridge B1b), connecting the 2 subunits; this bridge is implicated in subunit movement. Contacts the P site tRNA; the 5S rRNA and some of its associated proteins might help stabilize positioning of ribosome-bound tRNAs. The sequence is that of Large ribosomal subunit protein uL5 from Rhizorhabdus wittichii (strain DSM 6014 / CCUG 31198 / JCM 15750 / NBRC 105917 / EY 4224 / RW1) (Sphingomonas wittichii).